The primary structure comprises 442 residues: tRNA-2-methylthio-N(6)-dimethylallyladenosine synthase (442 aa).

Positions 2 to 120 constitute an MTTase N-terminal domain; that stretch reads KKVFIRTFGC…LPKMIVDKET (119 aa). [4Fe-4S] cluster-binding residues include Cys-11, Cys-49, Cys-83, Cys-157, Cys-161, and Cys-164. Positions 143-375 constitute a Radical SAM core domain; the sequence is RVEGGAAFVS…NEVIEAETAR (233 aa). The region spanning 378-441 is the TRAM domain; the sequence is QTMIGTVQRC…TFSLRGKIVE (64 aa).

Belongs to the methylthiotransferase family. MiaB subfamily. In terms of assembly, monomer. Requires [4Fe-4S] cluster as cofactor.

It localises to the cytoplasm. The enzyme catalyses N(6)-dimethylallyladenosine(37) in tRNA + (sulfur carrier)-SH + AH2 + 2 S-adenosyl-L-methionine = 2-methylsulfanyl-N(6)-dimethylallyladenosine(37) in tRNA + (sulfur carrier)-H + 5'-deoxyadenosine + L-methionine + A + S-adenosyl-L-homocysteine + 2 H(+). Functionally, catalyzes the methylthiolation of N6-(dimethylallyl)adenosine (i(6)A), leading to the formation of 2-methylthio-N6-(dimethylallyl)adenosine (ms(2)i(6)A) at position 37 in tRNAs that read codons beginning with uridine. The sequence is that of tRNA-2-methylthio-N(6)-dimethylallyladenosine synthase from Neisseria meningitidis serogroup A / serotype 4A (strain DSM 15465 / Z2491).